We begin with the raw amino-acid sequence, 429 residues long: MKIQVETVSPVERKVTIEVDPDRVAKELDRAYASLSRRVKLRGFRPGKAPRKVLERQFKAEVEGEVAERIVTETFTEAVRVESLPVVAPPSVSITDGVAEGKPMRYSARVEVKPKLEPKDYKGLEVTRKPPEVTDESVSAELTKIQDSMAQLVAVEGRFEAQEGDWAVIDHEGTIDGKPFDGSTAEGVTVKVAPGPITEGNVEALKGKKIGDTVELDEPFPADHRDEALRGKTAHMKVTLKALKVRQAPALDDALAKELGIEGVETLDALRTRIRSDLEKREKRRAESELKDALVKAALAKNEFEVPPALVERAIDTMIEGAAERFARQGIDLRQLQLDVSRMRADLREQALLQVRGALLLEAIADAEKVEVTEEDLEAEAARIADELGMPLAKVQQQTRGKDAREALKNRIREEKALSLLSSAATIQQ.

The PPIase FKBP-type domain occupies 164 to 249 (GDWAVIDHEG…LKALKVRQAP (86 aa)).

The protein belongs to the FKBP-type PPIase family. Tig subfamily.

Its subcellular location is the cytoplasm. It carries out the reaction [protein]-peptidylproline (omega=180) = [protein]-peptidylproline (omega=0). In terms of biological role, involved in protein export. Acts as a chaperone by maintaining the newly synthesized protein in an open conformation. Functions as a peptidyl-prolyl cis-trans isomerase. The protein is Trigger factor of Anaeromyxobacter dehalogenans (strain 2CP-C).